The chain runs to 162 residues: Xylulose kinase (162 aa).

Positions 16–39 (GGHSATPRPATGPAGPAAHSGRHQ) are disordered. Positions 20–33 (ATPRPATGPAGPAA) are enriched in low complexity.

This sequence belongs to the FGGY kinase family.

It carries out the reaction D-xylulose + ATP = D-xylulose 5-phosphate + ADP + H(+). Functionally, catalyzes the phosphorylation of D-xylulose to D-xylulose 5-phosphate. The polypeptide is Xylulose kinase (Actinoplanes sp. (strain ATCC 31351 / 3876) (Ampullariella sp.)).